A 159-amino-acid chain; its full sequence is Pathogenesis-related leaf protein 6 (159 aa).

Residues 1–24 (MGLFNISLLLTCLMVLAIFHSCEA) form the signal peptide. The residue at position 25 (Gln25) is a Pyrrolidone carboxylic acid. One can recognise an SCP domain in the interval 32–147 (LAVHNDARAQ…NGWWFISCNY (116 aa)). Cystine bridges form between Cys68–Cys136, Cys109–Cys115, and Cys131–Cys145.

Belongs to the CRISP family.

Its function is as follows. Probably involved in the defense reaction of plants against pathogens. Has antifungal activity. This Solanum lycopersicum (Tomato) protein is Pathogenesis-related leaf protein 6 (PR1B1).